The following is a 313-amino-acid chain: Beta-ketoacyl-[acyl-carrier-protein] synthase III (313 aa).

Residues Cys112 and His238 contribute to the active site. The interval 239 to 243 is ACP-binding; it reads QANIR. Asn268 is a catalytic residue.

It belongs to the thiolase-like superfamily. FabH family. In terms of assembly, homodimer.

Its subcellular location is the cytoplasm. The enzyme catalyses malonyl-[ACP] + acetyl-CoA + H(+) = 3-oxobutanoyl-[ACP] + CO2 + CoA. The protein operates within lipid metabolism; fatty acid biosynthesis. In terms of biological role, catalyzes the condensation reaction of fatty acid synthesis by the addition to an acyl acceptor of two carbons from malonyl-ACP. Catalyzes the first condensation reaction which initiates fatty acid synthesis and may therefore play a role in governing the total rate of fatty acid production. Possesses both acetoacetyl-ACP synthase and acetyl transacylase activities. Its substrate specificity determines the biosynthesis of branched-chain and/or straight-chain of fatty acids. The chain is Beta-ketoacyl-[acyl-carrier-protein] synthase III from Staphylococcus aureus (strain COL).